A 253-amino-acid polypeptide reads, in one-letter code: MHAFAVDGLPEIDAGDDLAALVAERADLTDGDVVCVASTVVSKAEGRTAALAEFTPGPRAEEIAARLADVTGEQKDPRFAQAVIEEATEVIMDAPFLLTETTCGHVGVNAGIDRSNTGGAELLLLPKRPAESAARIQAGLAADVGVVVTDTSGRPFRHGQRGVALGWAGLPAARDWRGETDRDGHELAVTVEAVVDELAATANLVSGEGDDGTPVVVVREFEFGDHDGSEQLFRAVDGDFVRQALRGWTFDGA.

GTP contacts are provided by residues 9 to 12, 38 to 39, and Lys-43; these read LPEI and ST. A divalent metal cation is bound at residue Asp-113. Asn-116 serves as a coordination point for GTP. Residues Asp-150, Thr-151, and Glu-208 each contribute to the a divalent metal cation site. 206 to 213 is a binding site for GTP; the sequence is SGEGDDGT.

It belongs to the CofE family. In terms of assembly, homodimer. Mg(2+) is required as a cofactor. Mn(2+) serves as cofactor. The cofactor is K(+).

It catalyses the reaction oxidized coenzyme F420-0 + GTP + L-glutamate = oxidized coenzyme F420-1 + GDP + phosphate + H(+). The enzyme catalyses oxidized coenzyme F420-1 + GTP + L-glutamate = oxidized coenzyme F420-2 + GDP + phosphate + H(+). It functions in the pathway cofactor biosynthesis; coenzyme F420 biosynthesis. Its function is as follows. Catalyzes the GTP-dependent successive addition of two or more gamma-linked L-glutamates to the L-lactyl phosphodiester of 7,8-didemethyl-8-hydroxy-5-deazariboflavin (F420-0) to form coenzyme F420-0-glutamyl-glutamate (F420-2) or polyglutamated F420 derivatives. In Halobacterium salinarum (strain ATCC 29341 / DSM 671 / R1), this protein is Coenzyme F420:L-glutamate ligase.